A 99-amino-acid polypeptide reads, in one-letter code: uncharacterized protein (99 aa).

Belongs to the HesB/IscA family.

This is an uncharacterized protein from Staphylococcus haemolyticus (strain JCSC1435).